The primary structure comprises 221 residues: Octanoyltransferase (221 aa).

Positions 31–216 constitute a BPL/LPL catalytic domain; the sequence is GQIGDTLLLL…SLCAIFDLRP (186 aa). Substrate is bound by residues 76-83, 145-147, and 159-161; these read RGGEVTYH, AIG, and GLA. Cysteine 177 (acyl-thioester intermediate) is an active-site residue.

This sequence belongs to the LipB family.

It is found in the cytoplasm. It catalyses the reaction octanoyl-[ACP] + L-lysyl-[protein] = N(6)-octanoyl-L-lysyl-[protein] + holo-[ACP] + H(+). It participates in protein modification; protein lipoylation via endogenous pathway; protein N(6)-(lipoyl)lysine from octanoyl-[acyl-carrier-protein]: step 1/2. Its function is as follows. Catalyzes the transfer of endogenously produced octanoic acid from octanoyl-acyl-carrier-protein onto the lipoyl domains of lipoate-dependent enzymes. Lipoyl-ACP can also act as a substrate although octanoyl-ACP is likely to be the physiological substrate. The sequence is that of Octanoyltransferase from Chloroflexus aggregans (strain MD-66 / DSM 9485).